Here is a 100-residue protein sequence, read N- to C-terminus: Urease subunit gamma (100 aa).

It belongs to the urease gamma subunit family. Heterotrimer of UreA (gamma), UreB (beta) and UreC (alpha) subunits. Three heterotrimers associate to form the active enzyme.

The protein localises to the cytoplasm. The enzyme catalyses urea + 2 H2O + H(+) = hydrogencarbonate + 2 NH4(+). The protein operates within nitrogen metabolism; urea degradation; CO(2) and NH(3) from urea (urease route): step 1/1. The polypeptide is Urease subunit gamma (Azoarcus sp. (strain BH72)).